The primary structure comprises 276 residues: 4-deoxy-L-threo-5-hexosulose-uronate ketol-isomerase (276 aa).

Residues His-194, His-196, Glu-201, and His-243 each contribute to the Zn(2+) site.

It belongs to the KduI family. Zn(2+) is required as a cofactor.

It carries out the reaction 5-dehydro-4-deoxy-D-glucuronate = 3-deoxy-D-glycero-2,5-hexodiulosonate. Its pathway is glycan metabolism; pectin degradation; 2-dehydro-3-deoxy-D-gluconate from pectin: step 4/5. Catalyzes the isomerization of 5-dehydro-4-deoxy-D-glucuronate to 3-deoxy-D-glycero-2,5-hexodiulosonate. This is 4-deoxy-L-threo-5-hexosulose-uronate ketol-isomerase from Lachnoclostridium phytofermentans (strain ATCC 700394 / DSM 18823 / ISDg) (Clostridium phytofermentans).